Here is a 309-residue protein sequence, read N- to C-terminus: Cytochrome c biogenesis protein CcsA (309 aa).

The next 8 helical transmembrane spans lie at 18 to 38 (LGLLVFYILLVNLPISLGAFF), 43 to 63 (FFIVRVLTILINFLITLQLLF), 67 to 87 (ISGHFPISNLYESLYFLTWGI), 102 to 122 (IIPSIAIPIELLTVAFACFVL), 148 to 168 (VMLSYAALIIGSLLSASVLFI), 216 to 236 (SILIGFVLLTLGLISGAVWAN), 250 to 267 (TWAFISWMFYAAYLHMRI), and 279 to 299 (LATTGFLVVLICYLGVNFLGI).

It belongs to the CcmF/CycK/Ccl1/NrfE/CcsA family. In terms of assembly, may interact with ccs1.

The protein localises to the cellular thylakoid membrane. In terms of biological role, required during biogenesis of c-type cytochromes (cytochrome c6 and cytochrome f) at the step of heme attachment. In Prochlorococcus marinus (strain MIT 9215), this protein is Cytochrome c biogenesis protein CcsA.